A 183-amino-acid chain; its full sequence is Peptidyl-tRNA hydrolase (183 aa).

Tyr-15 provides a ligand contact to tRNA. His-20 functions as the Proton acceptor in the catalytic mechanism. Residues Tyr-67 and Asn-69 each coordinate tRNA.

This sequence belongs to the PTH family. As to quaternary structure, monomer.

It is found in the cytoplasm. The catalysed reaction is an N-acyl-L-alpha-aminoacyl-tRNA + H2O = an N-acyl-L-amino acid + a tRNA + H(+). Hydrolyzes ribosome-free peptidyl-tRNAs (with 1 or more amino acids incorporated), which drop off the ribosome during protein synthesis, or as a result of ribosome stalling. In terms of biological role, catalyzes the release of premature peptidyl moieties from peptidyl-tRNA molecules trapped in stalled 50S ribosomal subunits, and thus maintains levels of free tRNAs and 50S ribosomes. In Chlamydia caviae (strain ATCC VR-813 / DSM 19441 / 03DC25 / GPIC) (Chlamydophila caviae), this protein is Peptidyl-tRNA hydrolase.